A 602-amino-acid polypeptide reads, in one-letter code: mRNA-decapping enzyme 1A (602 aa).

Position 82 is a phosphoserine (Ser-82). Over residues 152-161 the composition is skewed to basic and acidic residues; it reads RSQQAARDKQ. Disordered stretches follow at residues 152–174, 191–234, and 267–291; these read RSQQ…DQRP, NQMG…PSGH, and GDAS…APQS. A phosphoserine mark is found at Ser-162, Ser-199, and Ser-200. Positions 193–229 are enriched in polar residues; it reads MGGSNISSPGLQPSTQLSNLGSTETLEETPSGSQDKS. Phosphoserine is present on residues Ser-335 and Ser-339. Residue Thr-367 is modified to Phosphothreonine. At Ser-372 the chain carries Phosphoserine. Asymmetric dimethylarginine is present on Arg-395. At Thr-420 the chain carries Phosphothreonine. Ser-441, Ser-542, Ser-543, and Ser-545 each carry phosphoserine. A phosphothreonine mark is found at Thr-548 and Thr-551.

The protein belongs to the DCP1 family. Forms a complex with EDC3, DCP2, DDX6 and EDC4/HEDLS, within this complex directly interacts with EDC3. Part of a cytoplasmic complex containing proteins involved in mRNA decay, including XRN1 and LSM1. Interacts with DCP1B. Interacts with DCP2. Interacts with DDX17 in an RNA-independent manner. Interacts with PNRC2. Interacts with SMAD4. Interacts with UPF1. Interacts with ZC3HAV1. Interacts with ZFP36L1. Interacts with NBDY. Interacts with DHX34; the interaction is RNA-independent. In terms of tissue distribution, ubiquitous, with highest expression in the spleen and testis (at protein level).

It localises to the cytoplasm. Its subcellular location is the P-body. The protein localises to the nucleus. It carries out the reaction a 5'-end (N(7)-methyl 5'-triphosphoguanosine)-ribonucleoside in mRNA + H2O = N(7)-methyl-GDP + a 5'-end phospho-ribonucleoside in mRNA + 2 H(+). Its function is as follows. Necessary for the degradation of mRNAs, both in normal mRNA turnover and in nonsense-mediated mRNA decay. Removes the 7-methyl guanine cap structure from mRNA molecules, yielding a 5'-phosphorylated mRNA fragment and 7m-GDP. Contributes to the transactivation of target genes after stimulation by TGFB1. Essential for embryonic development. This chain is mRNA-decapping enzyme 1A (Dcp1a), found in Mus musculus (Mouse).